The primary structure comprises 66 residues: Beta-defensin 13 (66 aa).

The signal sequence occupies residues 1–22 (MRIFSLIVAGLVLLIQLHPAKG). 3 disulfide bridges follow: Cys-30–Cys-59, Cys-37–Cys-51, and Cys-41–Cys-60.

Belongs to the beta-defensin family.

Its subcellular location is the secreted. Its function is as follows. Has antibacterial activity. In Rattus norvegicus (Rat), this protein is Beta-defensin 13 (Defb13).